The primary structure comprises 440 residues: Ferredoxin--NADP reductase (440 aa).

Residues 17–75 form the CpcD-like domain; that stretch reads SRVFVYEVVGMRQNEETDQTNYPIRKSGSVFIRVPYNRMNQEMQRITRLGGKIVSIQTV. The segment at 98 to 142 is disordered; the sequence is AKSEGNGKATPVKTDSGAKGFAKPPAEEQLKKKDNKGNTMTQAKA. A compositionally biased stretch (basic and acidic residues) spans 122 to 133; that stretch reads PAEEQLKKKDNK. One can recognise an FAD-binding FR-type domain in the interval 155 to 279; the sequence is NAPFIGKVIS…TGPVGKEMLL (125 aa). Residues 214 to 217, 235 to 237, Tyr241, 253 to 255, and Thr294 contribute to the FAD site; these read RLYS, CVR, and VCS. The NADP(+) site is built by Ser217 and Arg237. NADP(+) is bound by residues Thr294, 330-331, 360-361, 370-374, 399-400, and Glu438; these read VP, SR, RMYIQ, and GL.

The protein belongs to the ferredoxin--NADP reductase type 1 family. Requires FAD as cofactor.

The protein resides in the cellular thylakoid membrane. The enzyme catalyses 2 reduced [2Fe-2S]-[ferredoxin] + NADP(+) + H(+) = 2 oxidized [2Fe-2S]-[ferredoxin] + NADPH. The polypeptide is Ferredoxin--NADP reductase (petH) (Nostoc sp. (strain PCC 7120 / SAG 25.82 / UTEX 2576)).